A 201-amino-acid polypeptide reads, in one-letter code: Probable GTP-binding protein EngB (201 aa).

Residues 22–195 (SLPEIAFCGR…MEQLEMILKY (174 aa)) form the EngB-type G domain. Residues 30–37 (GRSNVGKS), 57–61 (GKTRT), 75–78 (DLPG), 142–145 (TKLD), and 174–176 (YSS) each bind GTP. Mg(2+) contacts are provided by Ser37 and Thr59.

This sequence belongs to the TRAFAC class TrmE-Era-EngA-EngB-Septin-like GTPase superfamily. EngB GTPase family. Mg(2+) serves as cofactor.

In terms of biological role, necessary for normal cell division and for the maintenance of normal septation. This is Probable GTP-binding protein EngB from Finegoldia magna (strain ATCC 29328 / DSM 20472 / WAL 2508) (Peptostreptococcus magnus).